The following is a 250-amino-acid chain: Ribosomal RNA small subunit methyltransferase J (250 aa).

Residues Arg-101 to Asp-102, Glu-117 to Arg-118, Ser-153 to Ser-154, and Asp-171 contribute to the S-adenosyl-L-methionine site.

Belongs to the methyltransferase superfamily. RsmJ family.

Its subcellular location is the cytoplasm. The catalysed reaction is guanosine(1516) in 16S rRNA + S-adenosyl-L-methionine = N(2)-methylguanosine(1516) in 16S rRNA + S-adenosyl-L-homocysteine + H(+). Functionally, specifically methylates the guanosine in position 1516 of 16S rRNA. This chain is Ribosomal RNA small subunit methyltransferase J, found in Escherichia coli O81 (strain ED1a).